The primary structure comprises 386 residues: Chaperone protein DnaJ (386 aa).

Positions 3–68 (DYYEILEVAR…KKRQVYDRYG (66 aa)) constitute a J domain. The CR-type zinc-finger motif lies at 146-224 (GVDKELVISN…CKGQGAVKEK (79 aa)). C159, C162, C176, C179, C198, C201, C212, and C215 together coordinate Zn(2+). 4 CXXCXGXG motif repeats span residues 159-166 (CNVCNGKG), 176-183 (CSECKGRG), 198-205 (CPKCHGEG), and 212-219 (CKNCKGQG).

This sequence belongs to the DnaJ family. In terms of assembly, homodimer. Zn(2+) serves as cofactor.

It is found in the cytoplasm. Participates actively in the response to hyperosmotic and heat shock by preventing the aggregation of stress-denatured proteins and by disaggregating proteins, also in an autonomous, DnaK-independent fashion. Unfolded proteins bind initially to DnaJ; upon interaction with the DnaJ-bound protein, DnaK hydrolyzes its bound ATP, resulting in the formation of a stable complex. GrpE releases ADP from DnaK; ATP binding to DnaK triggers the release of the substrate protein, thus completing the reaction cycle. Several rounds of ATP-dependent interactions between DnaJ, DnaK and GrpE are required for fully efficient folding. Also involved, together with DnaK and GrpE, in the DNA replication of plasmids through activation of initiation proteins. This is Chaperone protein DnaJ from Protochlamydia amoebophila (strain UWE25).